The sequence spans 93 residues: Small ribosomal subunit protein uS19 (93 aa).

It belongs to the universal ribosomal protein uS19 family.

Its function is as follows. Protein S19 forms a complex with S13 that binds strongly to the 16S ribosomal RNA. This is Small ribosomal subunit protein uS19 from Nocardia farcinica (strain IFM 10152).